Reading from the N-terminus, the 257-residue chain is UPF0246 protein RSc2009 (257 aa).

Belongs to the UPF0246 family.

The sequence is that of UPF0246 protein RSc2009 from Ralstonia nicotianae (strain ATCC BAA-1114 / GMI1000) (Ralstonia solanacearum).